A 285-amino-acid polypeptide reads, in one-letter code: tRNA uridine(34) hydroxylase (285 aa).

Positions 130 to 225 constitute a Rhodanese domain; it reads RGDDVVFFDG…YGEAFGDTGL (96 aa). The active-site Cysteine persulfide intermediate is Cys185.

The protein belongs to the TrhO family.

The enzyme catalyses uridine(34) in tRNA + AH2 + O2 = 5-hydroxyuridine(34) in tRNA + A + H2O. Functionally, catalyzes oxygen-dependent 5-hydroxyuridine (ho5U) modification at position 34 in tRNAs. The protein is tRNA uridine(34) hydroxylase of Rhodococcus opacus (strain B4).